The sequence spans 496 residues: RNA-binding motif protein, Y chromosome, family 1 member A1 (496 aa).

Residues 8-85 (GKLFIGGLNR…KAIKVEQAKK (78 aa)) enclose the RRM domain. Disordered stretches follow at residues 78–349 (IKVE…HRDY) and 452–496 (KDQR…SSRY). Low complexity-rich tracts occupy residues 97–114 (PASSRNRSPSGSLRSARG) and 149–159 (PVKRGPSSRSG). The span at 175 to 184 (NSWMGSQGPM) shows a compositional bias: polar residues. Composition is skewed to basic and acidic residues over residues 204–214 (RNDRMSTRHDG), 242–253 (DNGHSNRDEHSS), 276–289 (AYRDYGHSRRDESY), 313–326 (GYRDYGHSRRHESY), 335–349 (SSRETRDYAPPHRDY), and 484–496 (GESRSEKGDSSRY).

In terms of assembly, interacts with splicing factor proteins SFRS3/SRP20, TRA2B/SFRS10, KHDRBS1/SAM68 and KHDRBS3. Testis-specific.

It is found in the nucleus. Functionally, RNA-binding protein involved in pre-mRNA splicing. Required for sperm development. Acts additively with TRA2B to promote exon 7 inclusion of the survival motor neuron SMN. Binds non-specifically to mRNAs. This is RNA-binding motif protein, Y chromosome, family 1 member A1 (RBMY1A1) from Homo sapiens (Human).